Here is a 257-residue protein sequence, read N- to C-terminus: Ribosome-recycling factor, mitochondrial (257 aa).

This sequence belongs to the RRF family.

It is found in the mitochondrion. Its function is as follows. Necessary for protein synthesis in mitochondria. Functions as a ribosome recycling factor in mitochondria. The protein is Ribosome-recycling factor, mitochondrial (RRF1) of Debaryomyces hansenii (strain ATCC 36239 / CBS 767 / BCRC 21394 / JCM 1990 / NBRC 0083 / IGC 2968) (Yeast).